The sequence spans 430 residues: Enolase (430 aa).

Q165 is a (2R)-2-phosphoglycerate binding site. E207 acts as the Proton donor in catalysis. Mg(2+) is bound by residues D244, E287, and D314. (2R)-2-phosphoglycerate is bound by residues K339, R368, S369, and K390. The active-site Proton acceptor is the K339.

The protein belongs to the enolase family. Component of the RNA degradosome, a multiprotein complex involved in RNA processing and mRNA degradation. Mg(2+) serves as cofactor.

It is found in the cytoplasm. Its subcellular location is the secreted. It localises to the cell surface. The catalysed reaction is (2R)-2-phosphoglycerate = phosphoenolpyruvate + H2O. It participates in carbohydrate degradation; glycolysis; pyruvate from D-glyceraldehyde 3-phosphate: step 4/5. In terms of biological role, catalyzes the reversible conversion of 2-phosphoglycerate (2-PG) into phosphoenolpyruvate (PEP). It is essential for the degradation of carbohydrates via glycolysis. The protein is Enolase of Xanthomonas axonopodis pv. citri (strain 306).